The sequence spans 320 residues: Small ribosomal subunit protein mS35 (320 aa).

Positions 24–63 (SVASPAAPRAGPRTASRSERPMRRKALPPRTEKMDTDQDW) are disordered.

The protein belongs to the mitochondrion-specific ribosomal protein mS35 family. As to quaternary structure, component of the mitochondrial ribosome small subunit (28S) which comprises a 12S rRNA and about 30 distinct proteins.

The protein localises to the mitochondrion. This is Small ribosomal subunit protein mS35 from Mus musculus (Mouse).